The primary structure comprises 211 residues: Uridine kinase (211 aa).

Residue 13–20 (GGTASGKT) coordinates ATP.

This sequence belongs to the uridine kinase family.

The protein localises to the cytoplasm. It catalyses the reaction uridine + ATP = UMP + ADP + H(+). The enzyme catalyses cytidine + ATP = CMP + ADP + H(+). Its pathway is pyrimidine metabolism; CTP biosynthesis via salvage pathway; CTP from cytidine: step 1/3. It functions in the pathway pyrimidine metabolism; UMP biosynthesis via salvage pathway; UMP from uridine: step 1/1. The sequence is that of Uridine kinase from Thermus thermophilus (strain ATCC BAA-163 / DSM 7039 / HB27).